Consider the following 299-residue polypeptide: Protoheme IX farnesyltransferase (299 aa).

A run of 8 helical transmembrane segments spans residues 24–44 (VVAL…DQGM), 46–66 (WNAL…AAAI), 94–114 (VHAL…LAWG), 118–138 (LTAW…TLFL), 146–166 (IVLG…SVTG), 172–192 (ALLL…ALAV), 232–252 (LPFI…ALGV), and 278–298 (ITYL…PVTL).

Belongs to the UbiA prenyltransferase family. Protoheme IX farnesyltransferase subfamily.

The protein resides in the cell inner membrane. The enzyme catalyses heme b + (2E,6E)-farnesyl diphosphate + H2O = Fe(II)-heme o + diphosphate. It functions in the pathway porphyrin-containing compound metabolism; heme O biosynthesis; heme O from protoheme: step 1/1. Functionally, converts heme B (protoheme IX) to heme O by substitution of the vinyl group on carbon 2 of heme B porphyrin ring with a hydroxyethyl farnesyl side group. In Hahella chejuensis (strain KCTC 2396), this protein is Protoheme IX farnesyltransferase.